A 309-amino-acid polypeptide reads, in one-letter code: MRKIIVGSRKSKLALTQTNWFIDQLKALGLPYEFEVKEIVTKGDVILDVTLSKVGGKGLFVKEIEHALLTKEIDMAVHSMKDMPAVLPEGLMIGCTPKRVDPRDAFISKSGASFKELAEGAILGTSSLRRSAQLLAARPDLQVKWIRGNIDTRLRKLKEEDYDAIILATAGLQRMGWDNEVITEHLDETLCVPAVGQGALAIECREDDKDLLQLLAHINDAVTEKTVAAERVFLHKLEGGCQVPIAGYATLTENDAIELTALVGSMDGSVLLKETVVGTDPEKVGLEAADRLIKQGAKELILAANKGQQ.

S-(dipyrrolylmethanemethyl)cysteine is present on C241.

This sequence belongs to the HMBS family. As to quaternary structure, monomer. Requires dipyrromethane as cofactor.

It catalyses the reaction 4 porphobilinogen + H2O = hydroxymethylbilane + 4 NH4(+). It functions in the pathway porphyrin-containing compound metabolism; protoporphyrin-IX biosynthesis; coproporphyrinogen-III from 5-aminolevulinate: step 2/4. Functionally, tetrapolymerization of the monopyrrole PBG into the hydroxymethylbilane pre-uroporphyrinogen in several discrete steps. This Bacillus thuringiensis (strain Al Hakam) protein is Porphobilinogen deaminase.